Reading from the N-terminus, the 585-residue chain is Arginine--tRNA ligase (585 aa).

The 'HIGH' region motif lies at 131 to 141; the sequence is ANPTGPMHVGH.

This sequence belongs to the class-I aminoacyl-tRNA synthetase family. In terms of assembly, monomer.

The protein localises to the cytoplasm. It carries out the reaction tRNA(Arg) + L-arginine + ATP = L-arginyl-tRNA(Arg) + AMP + diphosphate. In Rhizobium etli (strain CIAT 652), this protein is Arginine--tRNA ligase.